Here is a 319-residue protein sequence, read N- to C-terminus: Ribosomal large subunit pseudouridine synthase C (319 aa).

Positions 20–83 (QRIDNFLRTQ…AEREEEAVSP (64 aa)) constitute an S4 RNA-binding domain. Residue Asp-144 is part of the active site.

This sequence belongs to the pseudouridine synthase RluA family.

The enzyme catalyses uridine(955/2504/2580) in 23S rRNA = pseudouridine(955/2504/2580) in 23S rRNA. In terms of biological role, responsible for synthesis of pseudouridine from uracil at positions 955, 2504 and 2580 in 23S ribosomal RNA. This chain is Ribosomal large subunit pseudouridine synthase C (rluC), found in Escherichia coli O157:H7.